The primary structure comprises 165 residues: UPF0303 protein Bamb_1459 (165 aa).

The protein belongs to the UPF0303 family.

In Burkholderia ambifaria (strain ATCC BAA-244 / DSM 16087 / CCUG 44356 / LMG 19182 / AMMD) (Burkholderia cepacia (strain AMMD)), this protein is UPF0303 protein Bamb_1459.